Reading from the N-terminus, the 499-residue chain is MNFRNKYVLAIDQGTTSSRAILFNHQGTIITLAQKPFQQYFPKPGWVEHDPNEIWYTQSSVIKEAMAKADVTDSHIACIGIANQRETTIIWDRETGFPVYNAIVWQDRRTADYCEELKSQGWAERILQKTGLVIDAYFSATKIKWILDNVKGIRERAERGELCFGTVDTWLVWKLTRGAQFITDVTNASRTMLFNIRTLQWDQELLDLFTIPASMLPQVKACSEVYCETSTPIFKKGIPVSGMAGDQQAALFGQLCVEDGMIKTTYGTGCFMILNTGKEPVLSQNNLLTTIAWKLGDQTTYALEGSVFVGGAVVQWLRDGIGLIPNASITEQMAKSVSDNGGVYFVPALTGLGAPYWDQYARGAIIGITRGTTAAHLTRAALEGICYQVYDVLMAMENDIHAKPKEIRVDGGAIANNFLMQFQSDICRCPVVRPNVLETTALGAAYLAGLAIGYWKDIDELKEQWCLDKVFNPQMKEDTARKLLNEWHKAVGRSQNWAE.

Residue Thr15 coordinates ADP. Thr15, Thr16, and Ser17 together coordinate ATP. Thr15 is a binding site for sn-glycerol 3-phosphate. Arg19 contacts ADP. Residues Arg85, Glu86, Tyr137, and Asp246 each contribute to the sn-glycerol 3-phosphate site. Glycerol is bound by residues Arg85, Glu86, Tyr137, Asp246, and Gln247. Positions 268 and 311 each coordinate ADP. ATP is bound by residues Thr268, Gly311, Gln315, and Gly412. ADP-binding residues include Gly412 and Asn416.

This sequence belongs to the FGGY kinase family.

It catalyses the reaction glycerol + ATP = sn-glycerol 3-phosphate + ADP + H(+). The protein operates within polyol metabolism; glycerol degradation via glycerol kinase pathway; sn-glycerol 3-phosphate from glycerol: step 1/1. With respect to regulation, inhibited by fructose 1,6-bisphosphate (FBP). Key enzyme in the regulation of glycerol uptake and metabolism. Catalyzes the phosphorylation of glycerol to yield sn-glycerol 3-phosphate. This is Glycerol kinase from Parabacteroides distasonis (strain ATCC 8503 / DSM 20701 / CIP 104284 / JCM 5825 / NCTC 11152).